Consider the following 175-residue polypeptide: Disulfide bond formation protein B (175 aa).

Topologically, residues 1–13 are cytoplasmic; it reads MTALTRFAHSRSS. The helical transmembrane segment at 14 to 30 threads the bilayer; that stretch reads WFLLTGTAIGLEAAALY. Topologically, residues 31 to 48 are periplasmic; it reads FQYVMKLDPCVMCIYQRL. A disulfide bond links C40 and C43. A helical membrane pass occupies residues 49-64; that stretch reads AVFGILVAGLIGMTAP. Residues 65 to 71 are Cytoplasmic-facing; the sequence is KYRLIRI. The helical transmembrane segment at 72 to 89 threads the bilayer; that stretch reads LGASCWAVSATWGLKLAL. The Periplasmic portion of the chain corresponds to 90–144; that stretch reads ALVNMQNNPSPFATCSFLPEFPTWMPLHEWFPAVMLPTGMCTDLPWRFMDVTMAE. A disulfide bridge links C104 with C130. Residues 145 to 163 form a helical membrane-spanning segment; that stretch reads WMVVVFSTFLVIWLLFIVP. Residues 164-175 are Cytoplasmic-facing; sequence ILSGSTKPSLYK.

The protein belongs to the DsbB family.

It localises to the cell inner membrane. Functionally, required for disulfide bond formation in some periplasmic proteins. Acts by oxidizing the DsbA protein. The chain is Disulfide bond formation protein B from Shewanella sp. (strain W3-18-1).